Here is a 1408-residue protein sequence, read N- to C-terminus: DNA-directed RNA polymerase subunit beta' (1408 aa).

4 residues coordinate Zn(2+): cysteine 70, cysteine 72, cysteine 85, and cysteine 88. Positions 460, 462, and 464 each coordinate Mg(2+). 4 residues coordinate Zn(2+): cysteine 814, cysteine 887, cysteine 894, and cysteine 897.

It belongs to the RNA polymerase beta' chain family. As to quaternary structure, the RNAP catalytic core consists of 2 alpha, 1 beta, 1 beta' and 1 omega subunit. When a sigma factor is associated with the core the holoenzyme is formed, which can initiate transcription. Mg(2+) serves as cofactor. Zn(2+) is required as a cofactor.

It carries out the reaction RNA(n) + a ribonucleoside 5'-triphosphate = RNA(n+1) + diphosphate. DNA-dependent RNA polymerase catalyzes the transcription of DNA into RNA using the four ribonucleoside triphosphates as substrates. The polypeptide is DNA-directed RNA polymerase subunit beta' (Hydrogenovibrio crunogenus (strain DSM 25203 / XCL-2) (Thiomicrospira crunogena)).